The following is a 243-amino-acid chain: Small ribosomal subunit protein eS4 (243 aa).

The S4 RNA-binding domain maps to 43 to 105 (IPLLYIVRDY…TGEHYRVLPN (63 aa)).

The protein belongs to the eukaryotic ribosomal protein eS4 family.

This chain is Small ribosomal subunit protein eS4 (rps4e), found in Pyrococcus abyssi (strain GE5 / Orsay).